We begin with the raw amino-acid sequence, 517 residues long: E3 ubiquitin-protein ligase TRIM65 (517 aa).

N-acetylalanine is present on Ala2. The segment at Cys12 to Arg51 adopts an RING-type zinc-finger fold. The interval Ala75–Arg94 is disordered. Residues Asp90 to Arg137 form a B box-type zinc finger. Residues Cys95, His98, Cys117, and His125 each coordinate Zn(2+). The stretch at Ala139–Val227 forms a coiled coil. Ser185 carries the phosphoserine modification. Residue Lys206 forms a (Microbial infection) Glycyl lysine isopeptide (Lys-Gly) (interchain with G-Cter in ubiquitin) linkage. Positions Ala313–Val506 constitute a B30.2/SPRY domain.

Belongs to the TRIM/RBCC family. Homo-multimerizes. Interacts with ARRDC4.

Its subcellular location is the cytoplasm. The catalysed reaction is S-ubiquitinyl-[E2 ubiquitin-conjugating enzyme]-L-cysteine + [acceptor protein]-L-lysine = [E2 ubiquitin-conjugating enzyme]-L-cysteine + N(6)-ubiquitinyl-[acceptor protein]-L-lysine.. It functions in the pathway protein modification; protein ubiquitination. E3 ubiquitin ligase that plays a role in several processes including innate immnity, autophagy or inflammation. Negatively regulates miRNAs by modulating the ubiquitination and stability of TNRC6A, a protein involved in RNA-mediated gene silencing by both micro-RNAs (miRNAs) and short interfering RNAs. This ubiquitination results in the suppressed expression of miR-138-5p leading to increased autophagy. Upon enteroviral infection, promotes 'Lys-63'-mediated ubiquitination activation of IFIH1/MDA5 leading to innate signaling cascade. Mechanistically, selectively recognizes MDA5 filaments that occur on dsRNAs. Plays also a role in limitation of inflammation through different mechanisms. First, promotes 'Lys-48'-mediated ubiquitination of VCAM1 leading to its degradation and limitation of LPS-induced lung inflammation. In addition, negatively regulates inflammasome activation by promoting 'lys48'-linked ubiquitination of NLRP3 which is critical for the inhibition of NLRP3 inflammasome activation in resting macrophages. In Homo sapiens (Human), this protein is E3 ubiquitin-protein ligase TRIM65 (TRIM65).